We begin with the raw amino-acid sequence, 92 residues long: Acylphosphatase (92 aa).

A disulfide bridge connects residues Cys-5 and Cys-49. The region spanning 5 to 92 (CIIAWVYGRV…SGELTDFRIR (88 aa)) is the Acylphosphatase-like domain. Residues Arg-20 and Asn-38 contribute to the active site.

It belongs to the acylphosphatase family.

It catalyses the reaction an acyl phosphate + H2O = a carboxylate + phosphate + H(+). The polypeptide is Acylphosphatase (Escherichia coli O6:H1 (strain CFT073 / ATCC 700928 / UPEC)).